A 291-amino-acid chain; its full sequence is tRNA U34 carboxymethyltransferase (291 aa).

Residues K61, W75, K80, G100, 122–124 (DPS), 149–150 (VE), Y169, and R284 each bind carboxy-S-adenosyl-L-methionine.

The protein belongs to the class I-like SAM-binding methyltransferase superfamily. CmoB family. As to quaternary structure, homotetramer.

The enzyme catalyses carboxy-S-adenosyl-L-methionine + 5-hydroxyuridine(34) in tRNA = 5-carboxymethoxyuridine(34) in tRNA + S-adenosyl-L-homocysteine + H(+). Catalyzes carboxymethyl transfer from carboxy-S-adenosyl-L-methionine (Cx-SAM) to 5-hydroxyuridine (ho5U) to form 5-carboxymethoxyuridine (cmo5U) at position 34 in tRNAs. This Campylobacter jejuni subsp. jejuni serotype O:23/36 (strain 81-176) protein is tRNA U34 carboxymethyltransferase.